A 220-amino-acid chain; its full sequence is Large ribosomal subunit protein uL1 (220 aa).

It belongs to the universal ribosomal protein uL1 family. As to quaternary structure, part of the 50S ribosomal subunit.

Functionally, binds directly to 23S rRNA. The L1 stalk is quite mobile in the ribosome, and is involved in E site tRNA release. Protein L1 is also a translational repressor protein, it controls the translation of the L11 operon by binding to its mRNA. The chain is Large ribosomal subunit protein uL1 from Ehrlichia canis (strain Jake).